A 657-amino-acid polypeptide reads, in one-letter code: WD repeat-containing protein 70 (657 aa).

Disordered stretches follow at residues 1–21 (MEHSGTSEVTGADTAGPDPQL) and 43–172 (FEQT…PVQR). A compositionally biased stretch (basic and acidic residues) spans 45 to 78 (QTRRTAVERSRKTLEAREKEEEMNREKELRKQIE). The span at 82–105 (PAPSSSSAARERSQSSCRDTSSSD) shows a compositional bias: low complexity. Composition is skewed to acidic residues over residues 106-119 (SESDDSSDSSDDEL) and 150-168 (EEGEDDDDDELDDEGEEDN). WD repeat units lie at residues 183–222 (HGTKTVSALGLDPSGARLVTGGYDYDVKFWDFAGMDASFK), 230–271 (CECH…ECIK), 284–324 (GHTA…KQKS), 333–372 (GKKVIPTTCTYSRDGNLVAAACQNGSIQIWDRNLTVHPKF), 379–418 (DPGTDTSCVAFSYDGNVLASRGGDDTLKLWDVRQFNKPLF), 424–469 (PTLF…RVYE), and 472–511 (ITDASVVRCLWHPKLNQIMVGTGNGLAKVYYDPNKSQRGA). Residue Lys299 forms a Glycyl lysine isopeptide (Lys-Gly) (interchain with G-Cter in SUMO2) linkage. Lys455 carries the post-translational modification N6-acetyllysine. Basic and acidic residues predominate over residues 543–568 (REPRQRSTRKQLEKDRLDPLKSHKPE). The interval 543–584 (REPRQRSTRKQLEKDRLDPLKSHKPEPPVAGPGRGGRVGTHG) is disordered. Positions 574–584 (PGRGGRVGTHG) are enriched in gly residues. Phosphothreonine is present on Thr582. Glycyl lysine isopeptide (Lys-Gly) (interchain with G-Cter in SUMO2) cross-links involve residues Lys593 and Lys599. Phosphoserine is present on residues Ser624 and Ser641. Residues 634–657 (TMFAQVESDDEESKNEPEWKKRKI) form a disordered region. A compositionally biased stretch (basic and acidic residues) spans 647 to 657 (KNEPEWKKRKI).

The protein belongs to the WD repeat GAD-1 family.

This Mus musculus (Mouse) protein is WD repeat-containing protein 70 (Wdr70).